The chain runs to 533 residues: Calcium-dependent protein kinase 19 (533 aa).

2 stretches are compositionally biased toward polar residues: residues 1-12 and 24-38; these read MGSCCSRATSPD and SHQTKPAQTTPSYNH. The tract at residues 1–53 is disordered; it reads MGSCCSRATSPDSGRGGANGYGYSHQTKPAQTTPSYNHPQPPPPAEVRYTPSA. G2 carries N-myristoyl glycine lipidation. Residues 85–343 enclose the Protein kinase domain; it reads YSLGKELGRG…SAQVLQHPWL (259 aa). ATP-binding positions include 91–99 and K114; that span reads LGRGQFGVT. Residue D209 is the Proton acceptor of the active site. The interval 348-378 is autoinhibitory domain; that stretch reads ASDKPIDSAVLSRMKQFRAMNKLKKMALKVI. EF-hand domains are found at residues 385–420, 421–456, 457–492, and 497–527; these read EEIKGLKQMFTNMDTDNSGTITYEELKAGLAKLGSK, LSEAEVKQLMEAADVDGNGSIDYVEFITATMHRHKL, ERDEHLFKAFQYFDKDNSGFITRDELESALIEHEMG, and IKDIISEVDTDNDGRINYEEFCAMMRGGGMQ. Ca(2+)-binding residues include D398, D400, S402, T404, E409, D434, D436, N438, S440, E445, D470, D472, S474, E481, D505, D507, D509, R511, and E516.

The protein belongs to the protein kinase superfamily. Ser/Thr protein kinase family. CDPK subfamily. As to expression, expressed in root tips, leaf veins, mesophyll cells, flower reproductive organs and mature pollen grains.

It is found in the membrane. It carries out the reaction L-seryl-[protein] + ATP = O-phospho-L-seryl-[protein] + ADP + H(+). The catalysed reaction is L-threonyl-[protein] + ATP = O-phospho-L-threonyl-[protein] + ADP + H(+). Activated by calcium. Autophosphorylation may play an important role in the regulation of the kinase activity. Its function is as follows. May play a role in signal transduction pathways that involve calcium as a second messenger. The polypeptide is Calcium-dependent protein kinase 19 (Oryza sativa subsp. japonica (Rice)).